The sequence spans 93 residues: DNA-directed RNA polymerase subunit Rpo11 (93 aa).

It belongs to the archaeal Rpo11/eukaryotic RPB11/RPC19 RNA polymerase subunit family. In terms of assembly, part of the RNA polymerase complex.

The protein resides in the cytoplasm. The enzyme catalyses RNA(n) + a ribonucleoside 5'-triphosphate = RNA(n+1) + diphosphate. DNA-dependent RNA polymerase (RNAP) catalyzes the transcription of DNA into RNA using the four ribonucleoside triphosphates as substrates. The chain is DNA-directed RNA polymerase subunit Rpo11 from Methanocella arvoryzae (strain DSM 22066 / NBRC 105507 / MRE50).